Consider the following 254-residue polypeptide: Proteasome activator complex subunit 3 (254 aa).

N6-acetyllysine occurs at positions 6 and 14. K195 bears the N6-acetyllysine; by P300/CBP mark.

In terms of assembly, homoheptamer. In terms of processing, acetylation at the major site Lys-195 is important for oligomerization and ability to degrade its target substrates. Deacetylated by SIRT1.

Its function is as follows. Implicated in immunoproteasome assembly and required for efficient antigen processing. The PA28 activator complex enhances the generation of class I binding peptides by altering the cleavage pattern of the proteasome. The sequence is that of Proteasome activator complex subunit 3 from Gallus gallus (Chicken).